The primary structure comprises 262 residues: ATP synthase subunit a (262 aa).

The next 6 membrane-spanning stretches (helical) occupy residues 24-44, 84-104, 129-149, 165-185, 194-214, and 228-248; these read AVHL…LFVF, VIAP…AIDL, DISA…FYTV, PFNH…TLLA, LFGN…MYMA, and LVWA…FMML.

Belongs to the ATPase A chain family. F-type ATPases have 2 components, CF(1) - the catalytic core - and CF(0) - the membrane proton channel. CF(1) has five subunits: alpha(3), beta(3), gamma(1), delta(1), epsilon(1). CF(0) has three main subunits: a(1), b(2) and c(9-12). The alpha and beta chains form an alternating ring which encloses part of the gamma chain. CF(1) is attached to CF(0) by a central stalk formed by the gamma and epsilon chains, while a peripheral stalk is formed by the delta and b chains.

Its subcellular location is the cell inner membrane. In terms of biological role, key component of the proton channel; it plays a direct role in the translocation of protons across the membrane. In Actinobacillus pleuropneumoniae serotype 7 (strain AP76), this protein is ATP synthase subunit a.